Here is a 976-residue protein sequence, read N- to C-terminus: Probable alanine--tRNA ligase, chloroplastic/mitochondrial (976 aa).

A chloroplast and mitochondrion-targeting transit peptide spans 1–54 (MPRPGFAHATAPALAHARARISPVARRRVVVMRTRVDGAAKSLVTQLRLALGST). Residues 71–95 (LGTATNDQSTGTRANPNAEGKDNSG) are disordered. Over residues 73-85 (TATNDQSTGTRAN) the composition is skewed to polar residues.

It belongs to the class-II aminoacyl-tRNA synthetase family. As to quaternary structure, monomer. The cofactor is Zn(2+).

Its subcellular location is the plastid. The protein resides in the chloroplast. It localises to the mitochondrion. It carries out the reaction tRNA(Ala) + L-alanine + ATP = L-alanyl-tRNA(Ala) + AMP + diphosphate. Its function is as follows. Catalyzes the attachment of alanine to tRNA(Ala) in a two-step reaction: alanine is first activated by ATP to form Ala-AMP and then transferred to the acceptor end of tRNA(Ala). Also edits incorrectly charged tRNA(Ala) via its editing domain. The polypeptide is Probable alanine--tRNA ligase, chloroplastic/mitochondrial (Ostreococcus tauri).